The following is a 276-amino-acid chain: Protein TabB (276 aa).

Belongs to the transferase hexapeptide repeat family. Pyridoxal 5'-phosphate is required as a cofactor.

The protein is Protein TabB (tabB) of Pseudomonas amygdali pv. tabaci (Pseudomonas syringae pv. tabaci).